The sequence spans 452 residues: Chromosomal replication initiator protein DnaA (452 aa).

The interval 1–84 is domain I, interacts with DnaA modulators; that stretch reads MTENEQIFWN…SIEYVFEETQ (84 aa). The interval 84–110 is domain II; that stretch reads QSTSNSPQISQNKTAELATETLPFVQN. A domain III, AAA+ region region spans residues 111-329; sequence DLNPKYSFDN…GALKDISLVA (219 aa). ATP-binding residues include Gly-155, Gly-157, Lys-158, and Thr-159. The tract at residues 330-452 is domain IV, binds dsDNA; the sequence is NFKKLDVITV…EMETIKNKIK (123 aa).

It belongs to the DnaA family. Oligomerizes as a right-handed, spiral filament on DNA at oriC.

The protein resides in the cytoplasm. Functionally, plays an essential role in the initiation and regulation of chromosomal replication. ATP-DnaA binds to the origin of replication (oriC) to initiate formation of the DNA replication initiation complex once per cell cycle. Binds the DnaA box (a 9 base pair repeat at the origin) and separates the double-stranded (ds)DNA. Forms a right-handed helical filament on oriC DNA; dsDNA binds to the exterior of the filament while single-stranded (ss)DNA is stabiized in the filament's interior. The ATP-DnaA-oriC complex binds and stabilizes one strand of the AT-rich DNA unwinding element (DUE), permitting loading of DNA polymerase. After initiation quickly degrades to an ADP-DnaA complex that is not apt for DNA replication. Binds acidic phospholipids. This chain is Chromosomal replication initiator protein DnaA, found in Streptococcus mutans serotype c (strain ATCC 700610 / UA159).